Reading from the N-terminus, the 309-residue chain is Elongation factor Ts (309 aa).

The tract at residues 82–85 (TDFV) is involved in Mg(2+) ion dislocation from EF-Tu.

Belongs to the EF-Ts family.

The protein localises to the cytoplasm. Functionally, associates with the EF-Tu.GDP complex and induces the exchange of GDP to GTP. It remains bound to the aminoacyl-tRNA.EF-Tu.GTP complex up to the GTP hydrolysis stage on the ribosome. The chain is Elongation factor Ts from Rickettsia bellii (strain OSU 85-389).